The primary structure comprises 476 residues: Probable periplasmic serine endoprotease DegP-like (476 aa).

A signal peptide spans 1-27; sequence MSIPRLKSYFTILATVLVLGQAVSAQA. Catalysis depends on charge relay system residues H116, D146, and S219. Substrate is bound by residues 217 to 219 and 274 to 278; these read GNS and LGVVI. PDZ domains lie at 263-354 and 360-465; these read LKTG…IRDG and ELTV…LRQG.

This sequence belongs to the peptidase S1C family.

It is found in the periplasm. The enzyme catalyses Acts on substrates that are at least partially unfolded. The cleavage site P1 residue is normally between a pair of hydrophobic residues, such as Val-|-Val.. Functionally, might be efficient in the degradation of transiently denatured and unfolded proteins which accumulate in the periplasm following stress conditions. This is Probable periplasmic serine endoprotease DegP-like (mucD) from Pseudomonas fluorescens (strain ATCC BAA-477 / NRRL B-23932 / Pf-5).